A 134-amino-acid polypeptide reads, in one-letter code: Cytochrome b5 (134 aa).

Residue Ala2 is modified to N-acetylalanine. An N6-acetyllysine mark is found at Lys7, Lys10, and Lys19. Residues 9–85 (VKYYTLEEIK…SKTFIIGELH (77 aa)) enclose the Cytochrome b5 heme-binding domain. His44 and His68 together coordinate heme. The helical transmembrane segment at 109–131 (WWTNWVIPAISALIVALMYRLYM) threads the bilayer.

The protein belongs to the cytochrome b5 family.

The protein localises to the endoplasmic reticulum membrane. It is found in the microsome membrane. In terms of biological role, cytochrome b5 is a membrane-bound hemoprotein functioning as an electron carrier for several membrane-bound oxygenases. The sequence is that of Cytochrome b5 (CYB5A) from Oryctolagus cuniculus (Rabbit).